A 563-amino-acid chain; its full sequence is Cytochrome P450 monooxygenase efuG (563 aa).

The chain crosses the membrane as a helical span at residues 10–30; sequence ITSHQWGIGSVFLLISIPLIV. Residues 462 to 482 are disordered; the sequence is PDDPQSGPRKDAKKQKAKSDG. A heme-binding site is contributed by Cys505.

It belongs to the cytochrome P450 family. The cofactor is heme.

It is found in the membrane. It functions in the pathway secondary metabolite biosynthesis; terpenoid biosynthesis. In terms of biological role, cytochrome P450 monooxygenase; part of the gene cluster that mediates the biosynthesis of enfumafungin, a glycosylated fernene-type triterpenoid with potent antifungal activity, mediated by its interaction with beta-1,3-glucan synthase and the fungal cell wall. The pathway begins with the terpene cyclase-glycosyl transferase fusion protein that most likely uses 2,3-oxidosqualene as substrate and catalyzes glycosylation immediately after cyclization. The fernene glycoside then could be processed by the desaturase efuI which catalyzes isomerization of a double bond established by efuA to form the core structure. The latter would then undergo a series of hydroxylations in unknown order at C-2, C-19, C-23 and C-25, which would be catalyzed by two of the three cytochrome P450 monooxygenases efuB, efuG or efuH. The hydroxy-group at C-25 becomes oxidized by the dehydrogenase efuE to enable a spontaneous, non-enzymatic hemiacetal formation with C-23. After hydroxylation at C-2, acetylation by the acetyltransferase efuC takes place. The final steps in enfumafungin biosynthesis require expansion of the 5-membered ring by lactonization via a Baeyer-Villiger reaction mediated by one of the BGC's cytochrome P450 monooxygenases (efuB, efuG or efuH) followed by ring cleavage. This type of reaction would establish a double bond between C-20 and C-21 which could be reduced by the reductase efuL to form the final product. This Hormonema carpetanum protein is Cytochrome P450 monooxygenase efuG.